The primary structure comprises 415 residues: 26S proteasome regulatory subunit 6B (415 aa).

Residue 203 to 210 (GPPGCGKT) participates in ATP binding.

It belongs to the AAA ATPase family.

Its subcellular location is the cytoplasm. The protein localises to the nucleus. Its function is as follows. The 26S proteasome is involved in the ATP-dependent degradation of ubiquitinated proteins. The regulatory (or ATPase) complex confers ATP dependency and substrate specificity to the 26S complex. This Manduca sexta (Tobacco hawkmoth) protein is 26S proteasome regulatory subunit 6B.